Reading from the N-terminus, the 153-residue chain is Transcription antitermination protein NusB (153 aa).

It belongs to the NusB family.

In terms of biological role, involved in transcription antitermination. Required for transcription of ribosomal RNA (rRNA) genes. Binds specifically to the boxA antiterminator sequence of the ribosomal RNA (rrn) operons. This is Transcription antitermination protein NusB from Symbiobacterium thermophilum (strain DSM 24528 / JCM 14929 / IAM 14863 / T).